Here is a 231-residue protein sequence, read N- to C-terminus: Lipoprotein-releasing system ATP-binding protein LolD (231 aa).

The ABC transporter domain maps to Leu-6 to Leu-231. Residue Gly-42–Ser-49 participates in ATP binding.

This sequence belongs to the ABC transporter superfamily. Lipoprotein translocase (TC 3.A.1.125) family. The complex is composed of two ATP-binding proteins (LolD) and two transmembrane proteins (LolC and LolE).

The protein localises to the cell inner membrane. Part of the ABC transporter complex LolCDE involved in the translocation of mature outer membrane-directed lipoproteins, from the inner membrane to the periplasmic chaperone, LolA. Responsible for the formation of the LolA-lipoprotein complex in an ATP-dependent manner. The sequence is that of Lipoprotein-releasing system ATP-binding protein LolD from Hahella chejuensis (strain KCTC 2396).